Consider the following 218-residue polypeptide: Ribose-5-phosphate isomerase A (218 aa).

Substrate is bound by residues K7, 28 to 31 (TGST), 81 to 84 (DGAD), and 94 to 97 (KGGG). The Proton acceptor role is filled by E103. K121 serves as a coordination point for substrate.

Belongs to the ribose 5-phosphate isomerase family. In terms of assembly, homodimer.

It carries out the reaction aldehydo-D-ribose 5-phosphate = D-ribulose 5-phosphate. Its pathway is carbohydrate degradation; pentose phosphate pathway; D-ribose 5-phosphate from D-ribulose 5-phosphate (non-oxidative stage): step 1/1. In terms of biological role, catalyzes the reversible conversion of ribose-5-phosphate to ribulose 5-phosphate. This Vibrio vulnificus (strain YJ016) protein is Ribose-5-phosphate isomerase A.